The primary structure comprises 453 residues: Phosphoglucosamine mutase (453 aa).

Catalysis depends on serine 100, which acts as the Phosphoserine intermediate. The Mg(2+) site is built by serine 100, aspartate 239, aspartate 241, and aspartate 243. At serine 100 the chain carries Phosphoserine.

Belongs to the phosphohexose mutase family. Requires Mg(2+) as cofactor. Post-translationally, activated by phosphorylation.

The enzyme catalyses alpha-D-glucosamine 1-phosphate = D-glucosamine 6-phosphate. Functionally, catalyzes the conversion of glucosamine-6-phosphate to glucosamine-1-phosphate. This chain is Phosphoglucosamine mutase, found in Buchnera aphidicola subsp. Baizongia pistaciae (strain Bp).